A 169-amino-acid polypeptide reads, in one-letter code: Phosphopantetheine adenylyltransferase (169 aa).

Thr-13 is a substrate binding site. ATP-binding positions include 13 to 14 and His-21; that span reads TF. Substrate contacts are provided by Lys-45, Leu-82, and Arg-96. Residues 97-99, Glu-107, and 132-138 contribute to the ATP site; these read GLR and HQFISSR.

Belongs to the bacterial CoaD family. As to quaternary structure, homohexamer. Requires Mg(2+) as cofactor.

It localises to the cytoplasm. It catalyses the reaction (R)-4'-phosphopantetheine + ATP + H(+) = 3'-dephospho-CoA + diphosphate. The protein operates within cofactor biosynthesis; coenzyme A biosynthesis; CoA from (R)-pantothenate: step 4/5. Functionally, reversibly transfers an adenylyl group from ATP to 4'-phosphopantetheine, yielding dephospho-CoA (dPCoA) and pyrophosphate. This is Phosphopantetheine adenylyltransferase from Acidiphilium cryptum (strain JF-5).